We begin with the raw amino-acid sequence, 1176 residues long: Surface-layer 125 kDa protein (1176 aa).

The N-terminal stretch at 1-30 (MAKQNKGRKFFAASATAALVASAIVPVASA) is a signal peptide. SLH domains are found at residues 31 to 88 (AQLN…LEAE), 89 to 152 (GDVN…DLSE), and 153 to 216 (FADA…PKVD).

It localises to the secreted. The protein localises to the cell wall. The protein resides in the S-layer. Its function is as follows. The S-layer is a paracrystalline mono-layered assembly of proteins which coat the surface of bacteria. This is Surface-layer 125 kDa protein from Lysinibacillus sphaericus (Bacillus sphaericus).